The sequence spans 1056 residues: Kinesin-like protein KIN-5A (1056 aa).

The interval 1-44 (MDRRIGLTSPSPKSTEKSGRDLRSGGDANGGANTNSNSIPRGDK) is disordered. The span at 14 to 24 (STEKSGRDLRS) shows a compositional bias: basic and acidic residues. The 347-residue stretch at 49 to 395 (NVQVILRCRP…LDYAHRAKNI (347 aa)) folds into the Kinesin motor domain. Residue 135-142 (GQTGTGKT) coordinates ATP. The stretch at 443–525 (QEEAEKKAMT…STIKEKEYVI (83 aa)) forms a coiled coil.

Belongs to the TRAFAC class myosin-kinesin ATPase superfamily. Kinesin family. KIN-5/BimC subfamily.

It is found in the cytoplasm. The protein resides in the cytoskeleton. Its subcellular location is the spindle. Responsible for microtubule translocation. May be important for the organization of phragmoplast-specific arrays of microtubules. Plays an essential role in stabilizing the mitotic spindle. Required during mitotic cytokinesis. The polypeptide is Kinesin-like protein KIN-5A (Oryza sativa subsp. japonica (Rice)).